Here is a 321-residue protein sequence, read N- to C-terminus: Ferredoxin--NADP reductase (321 aa).

7 residues coordinate FAD: Asp-28, Gln-36, Tyr-41, Ala-81, Phe-115, Asp-274, and Ser-315.

The protein belongs to the ferredoxin--NADP reductase type 2 family. Homodimer. FAD serves as cofactor.

It carries out the reaction 2 reduced [2Fe-2S]-[ferredoxin] + NADP(+) + H(+) = 2 oxidized [2Fe-2S]-[ferredoxin] + NADPH. This chain is Ferredoxin--NADP reductase, found in Frankia casuarinae (strain DSM 45818 / CECT 9043 / HFP020203 / CcI3).